The following is a 305-amino-acid chain: Olfactory receptor 4F17 (305 aa).

Topologically, residues 1-18 (MVTEFIFLGLSDSQGLQT) are extracellular. A helical transmembrane segment spans residues 19-42 (FLFMLFFVFYGGIVFGNLLIVITV). The Cytoplasmic segment spans residues 43 to 50 (VSDSHLHS). Residues 51-72 (PMYFLLANLSLIDLSLSSVTAP) form a helical membrane-spanning segment. The Extracellular segment spans residues 73–93 (KMITDFFSQRKVISFKGCLVQ). A disulfide bond links Cys-90 and Cys-182. A helical membrane pass occupies residues 94 to 113 (IFLLHFFGGSEMVILIAMGF). Topologically, residues 114 to 132 (DRYIAICKPLHYTTIMCGN) are cytoplasmic. The helical transmembrane segment at 133-151 (ACVGIMAVAWGIGFLHSVS) threads the bilayer. Topologically, residues 152–188 (QLAFAVHLPFCGPNEVDSFYCDLPRVIKLACTDTYRL) are extracellular. The helical transmembrane segment at 189-212 (DIMVIANSGVLTVCSFVLLIISYT) threads the bilayer. Topologically, residues 213–228 (IILMTIQHRPLDKSSK) are cytoplasmic. The chain crosses the membrane as a helical span at residues 229–251 (ALSTLTAHITVVLLFFGPCVFIY). At 252-262 (AWPFPIKSLDK) the chain is on the extracellular side. Residues 263 to 282 (FLAVFYSVITPLLNPIIYTL) form a helical membrane-spanning segment. Residues 283 to 305 (RNKDMKTAIRQLRKWDAHSSVKF) are Cytoplasmic-facing.

The protein belongs to the G-protein coupled receptor 1 family.

It is found in the cell membrane. Functionally, odorant receptor. In Homo sapiens (Human), this protein is Olfactory receptor 4F17 (OR4F17).